A 478-amino-acid chain; its full sequence is Transposase for insertion sequence element IS231B (478 aa).

It belongs to the transposase 11 family.

Functionally, involved in the transposition of the insertion sequence. The polypeptide is Transposase for insertion sequence element IS231B (Bacillus thuringiensis subsp. berliner).